A 302-amino-acid polypeptide reads, in one-letter code: Pathogenicity locus probable regulatory protein HrpS (302 aa).

In terms of domain architecture, Sigma-54 factor interaction spans 9–237 (DDLDAERVPN…LKAAAKRHVL (229 aa)). Residues 37 to 44 (GETGTGKD) and 99 to 108 (AQGGTLYLDE) each bind ATP. Positions 279 to 298 (IDAASLELDIPRRTLYRRIK) form a DNA-binding region, H-T-H motif.

Functionally, regulates the activation of the sigma factor HrpL which itself induces the expression of hprD as well as other hrp loci which are involved in plant pathogenicity, hrmA and avr genes. Probably interacts with sigma-54. This Pseudomonas syringae pv. syringae protein is Pathogenicity locus probable regulatory protein HrpS (hrpS).